A 129-amino-acid polypeptide reads, in one-letter code: Transcription antitermination protein NusB (129 aa).

Belongs to the NusB family.

In terms of biological role, involved in transcription antitermination. Required for transcription of ribosomal RNA (rRNA) genes. Binds specifically to the boxA antiterminator sequence of the ribosomal RNA (rrn) operons. The polypeptide is Transcription antitermination protein NusB (Bacillus licheniformis (strain ATCC 14580 / DSM 13 / JCM 2505 / CCUG 7422 / NBRC 12200 / NCIMB 9375 / NCTC 10341 / NRRL NRS-1264 / Gibson 46)).